A 315-amino-acid chain; its full sequence is NAD-dependent protein deacylase sirtuin-5, mitochondrial (315 aa).

The transit peptide at 1–39 (MSLLHFATRRLILQVLRELGLKAPPVHKTLKICIAMSRP) directs the protein to the mitochondrion. The 273-residue stretch at 40-312 (SSNMADFRRF…PEALSPHESE (273 aa)) folds into the Deacetylase sirtuin-type domain. 61 to 80 (GAGVSAESGVPTFRGPGGFW) contacts NAD(+). Substrate contacts are provided by Tyr105 and Arg108. 143–146 (QNID) contacts NAD(+). The Proton acceptor role is filled by His161. NAD(+)-binding positions include 254–256 (GTS), 280–282 (NTV), and Cys298.

This sequence belongs to the sirtuin family. Class III subfamily. In terms of assembly, monomer. Homodimer. Interacts with CPS1.

The protein localises to the mitochondrion. The protein resides in the cytoplasm. Its subcellular location is the cytosol. It localises to the nucleus. It carries out the reaction N(6)-malonyl-L-lysyl-[protein] + NAD(+) + H2O = 2''-O-malonyl-ADP-D-ribose + nicotinamide + L-lysyl-[protein]. It catalyses the reaction N(6)-succinyl-L-lysyl-[protein] + NAD(+) + H2O = 2''-O-succinyl-ADP-D-ribose + nicotinamide + L-lysyl-[protein]. The catalysed reaction is N(6)-glutaryl-L-lysyl-[protein] + NAD(+) + H2O = 2''-O-glutaryl-ADP-D-ribose + nicotinamide + L-lysyl-[protein]. Its function is as follows. NAD-dependent lysine demalonylase, desuccinylase and deglutarylase that specifically removes malonyl, succinyl and glutaryl groups on target proteins. Activates CPS1 and contributes to the regulation of blood ammonia levels during prolonged fasting: acts by mediating desuccinylation and deglutarylation of CPS1, thereby increasing CPS1 activity in response to elevated NAD levels during fasting. Activates SOD1 by mediating its desuccinylation, leading to reduced reactive oxygen species. Activates SHMT2 by mediating its desuccinylation. Modulates ketogenesis through the desuccinylation and activation of HMGCS2. Has weak NAD-dependent protein deacetylase activity; however this activity may not be physiologically relevant in vivo. Can deacetylate cytochrome c (CYCS) and a number of other proteins in vitro such as UOX. This is NAD-dependent protein deacylase sirtuin-5, mitochondrial from Monodelphis domestica (Gray short-tailed opossum).